We begin with the raw amino-acid sequence, 290 residues long: Carbonic anhydrase-related protein (290 aa).

S5 is modified (phosphoserine). In terms of domain architecture, Alpha-carbonic anhydrase spans V27–F289. H87 (proton donor/acceptor) is an active-site residue. Residues H118 and H141 each contribute to the Zn(2+) site.

The protein belongs to the alpha-carbonic anhydrase family.

In terms of biological role, does not have a carbonic anhydrase catalytic activity. The polypeptide is Carbonic anhydrase-related protein (Ca8) (Rattus norvegicus (Rat)).